The primary structure comprises 1373 residues: DNA-directed RNA polymerase subunit beta (1373 aa).

This sequence belongs to the RNA polymerase beta chain family. In terms of assembly, the RNAP catalytic core consists of 2 alpha, 1 beta, 1 beta' and 1 omega subunit. When a sigma factor is associated with the core the holoenzyme is formed, which can initiate transcription.

The catalysed reaction is RNA(n) + a ribonucleoside 5'-triphosphate = RNA(n+1) + diphosphate. In terms of biological role, DNA-dependent RNA polymerase catalyzes the transcription of DNA into RNA using the four ribonucleoside triphosphates as substrates. The chain is DNA-directed RNA polymerase subunit beta from Rickettsia massiliae (strain Mtu5).